Here is a 2291-residue protein sequence, read N- to C-terminus: Protein Ycf2 A (2291 aa).

1642–1649 (GSIGTGRS) provides a ligand contact to ATP.

The protein belongs to the Ycf2 family.

The protein localises to the plastid. It localises to the chloroplast stroma. Probable ATPase of unknown function. Its presence in a non-photosynthetic plant (Epifagus virginiana) and experiments in tobacco indicate that it has an essential function which is probably not related to photosynthesis. In Atropa belladonna (Belladonna), this protein is Protein Ycf2 A (ycf2-A).